Reading from the N-terminus, the 2774-residue chain is Microtubule-associated protein 1A (2774 aa).

Phosphoserine is present on residues S114, S117, S118, S121, and S155. The residue at position 177 (Y177) is a Phosphotyrosine. The segment at 310–329 is disordered; it reads PSKIKHRADSKESLKAAPKT. 2 positions are modified to phosphoserine: S319 and S322. Repeat 1 spans residues 336-338; it reads KRE. Positions 336 to 541 are 11 X 3 AA repeats of K-K-[DE]; the sequence is KREEVLEEGA…TQDFEELKRE (206 aa). The segment covering 342–390 has biased composition (basic and acidic residues); it reads EEGAKEARSELAKELAKTEKKAKEPSEKPPEKPSKSERVRGESSEALKA. 9 disordered regions span residues 342–718, 737–808, 845–939, 957–1078, 1093–1344, 1357–1646, 1693–1725, 1739–1843, and 1861–2644; these read EEGA…SFLS, TIPG…TELT, EDQS…VGKE, FGAP…QTGC, ETGE…ILPE, QKDG…SPEQ, ESTFLDEGPDEQEITPLQHTPRSPWTSDFKDFQ, LAES…VPFS, and AELE…LVNG. S384 carries the post-translational modification Phosphoserine. The segment covering 391 to 406 has biased composition (basic residues); sequence EKRRLIKDKAGKKHLK. 2 stretches are compositionally biased toward basic and acidic residues: residues 407-464 and 484-500; these read EKIS…KPDL and VKVDKGRAARGEKELSS. 9 repeat units span residues 415–417, 420–422, 424–426, 427–429, 431–433, 436–438, 440–442, 444–446, and 449–451. Position 504 is a phosphothreonine (T504). Residues 506–516 show a composition bias toward low complexity; that stretch reads PAQKGAAPPAA. S526 and S527 each carry phosphoserine. 2 stretches are compositionally biased toward basic and acidic residues: residues 536-554 and 584-595; these read EELKREERGLLAEQRDTGL and EGEHVEREKEVV. Copy 11 of the repeat occupies 539-541; that stretch reads KRE. A phosphoserine mark is found at S604 and S611. Basic and acidic residues-rich tracts occupy residues 614-631 and 638-675; these read EVEKEKETWEERKQREAE and AAREESEAEVKEDVIEKAELEEMEETHPSDEEGEETKA. Phosphoserine is present on S643. T663 carries the phosphothreonine modification. 4 positions are modified to phosphoserine: S666, S677, S690, and S785. Polar residues-rich tracts occupy residues 845–858 and 869–881; these read EDQSVASLTAPQTE and TVTSIPSSRTEAT. A phosphoserine mark is found at S872, S875, S876, and S889. Residue T892 is modified to Phosphothreonine. 22 positions are modified to phosphoserine: S894, S898, S907, S980, S990, S998, S1007, S1013, S1022, S1029, S1037, S1061, S1132, S1134, S1148, S1160, S1178, S1188, S1191, S1197, S1206, and S1209. Residues 1008–1028 are compositionally biased toward basic and acidic residues; that stretch reads PVEDKSEPRDFQEDSWGETKH. Residues 1142 to 1157 are compositionally biased toward polar residues; sequence SVLSVVSPDTTKQEAT. The segment covering 1180-1190 has biased composition (polar residues); it reads EDTQSLSFSEE. Over residues 1198–1212 the composition is skewed to polar residues; it reads LDISSKQLSPESLGT. Residues 1220–1236 show a composition bias toward basic and acidic residues; sequence LGKEERGPVMKAEDDSC. Phosphoserine occurs at positions 1252, 1280, 1301, 1304, and 1307. The span at 1293–1308 shows a compositional bias: low complexity; it reads TSDSSLTKSPESLSSP. Composition is skewed to basic and acidic residues over residues 1317–1336, 1357–1409, 1416–1428, 1436–1479, and 1487–1574; these read WEGKAPGKEKEPELKSETRQ, QKDG…EDQG, AEKDKASEQRDTD, EPRD…EHSI, and RAPD…KADS. A phosphoserine mark is found at S1504, S1568, S1574, and S1594. Residues 1599 to 1613 show a composition bias toward basic and acidic residues; that stretch reads SKAREQEKKYWKEQD. Phosphoserine occurs at positions 1622, 1643, 1715, 1742, 1757, 1763, and 1767. Over residues 1707-1718 the composition is skewed to polar residues; sequence TPLQHTPRSPWT. Position 1772 is a phosphothreonine (T1772). Residues S1778 and S1784 each carry the phosphoserine modification. Polar residues predominate over residues 1789-1803; that stretch reads TESTAPMRNEPTTPS. A compositionally biased stretch (pro residues) spans 1818 to 1839; sequence LPPAPLSPAPAPPTPAPEPHTP. Basic and acidic residues predominate over residues 1873–1885; sequence KDYRKAEGEREGE. S1897 carries the post-translational modification Phosphoserine. Residues 1908–1930 show a composition bias toward basic and acidic residues; sequence ATRDTEQTEPEQREPTPYPDERS. The residue at position 1923 (T1923) is a Phosphothreonine. Polar residues predominate over residues 1984-1997; that stretch reads SSPASPQNLQSDTP. Residue S1988 is modified to Phosphoserine. Residues 2008 to 2034 are compositionally biased toward pro residues; the sequence is AVPPRQEPDPGPNVEPSITPPAVPPRA. Residue T2026 is modified to Phosphothreonine. A phosphoserine mark is found at S2043 and S2077. Residues 2055–2092 show a composition bias toward basic and acidic residues; sequence PDRRTPSPKETGRGHWDDGTNDSDLEKGAREQPEKETR. Residues 2115–2125 are compositionally biased toward low complexity; sequence SSLSSDSHLGS. Residues 2144–2153 are compositionally biased toward pro residues; that stretch reads PAPPQLPSPA. 6 positions are modified to phosphoserine: S2204, S2221, S2225, S2228, S2229, and S2260. A compositionally biased stretch (polar residues) spans 2226-2237; the sequence is EGSSSEATTPVI. The segment covering 2271–2287 has biased composition (low complexity); it reads DLTPLSPAPSASLDLAP. The span at 2288–2298 shows a compositional bias: pro residues; it reads APAPAPAPAPG. Residues 2299–2309 are compositionally biased toward low complexity; the sequence is LPGDLGDGTLP. Residues 2352 to 2364 show a composition bias toward basic and acidic residues; that stretch reads AEKEEAEAPHAWE. Position 2424 is a phosphoserine (S2424). Residues 2477–2489 show a composition bias toward low complexity; it reads SASDSGSSQSDSD. Residues 2534–2550 are compositionally biased toward pro residues; sequence DPPPTPLPDPRPSPPRP. A compositionally biased stretch (basic and acidic residues) spans 2565-2575; it reads GRVERLREKGR. Over residues 2613 to 2623 the composition is skewed to low complexity; the sequence is RTVPRPRSTPS. 2 positions are modified to phosphoserine: S2620 and S2635.

The protein belongs to the MAP1 family. As to quaternary structure, 3 different light chains, LC1 (a cleavage product of MAP1B), LC2 (a cleavage product of MAP1A) and LC3 (produced by one of the MAP1LC3 genes), can associate with the MAP1A or MAP1B heavy chains. Interacts with guanylate kinase-like domain of DLG1, DLG2 and DLG4. Binds to CSNK1D. Interacts with TIAM2. In terms of assembly, interacts with ELAVL4. Phosphorylated by CSNK1D. In terms of processing, LC2 is generated from MAP1A by proteolytic processing. It is free to associate with both MAP1A and MAP1B. As to expression, brain, heart and muscle.

The protein localises to the cytoplasm. The protein resides in the cytoskeleton. Functionally, structural protein involved in the filamentous cross-bridging between microtubules and other skeletal elements. The chain is Microtubule-associated protein 1A (Map1a) from Rattus norvegicus (Rat).